Consider the following 628-residue polypeptide: MSEKKYTFETEVDKLLHLVIHSLYSNREIFLRELVSNSSDAIEKLRYESISNAALNEDDTDYAIRIDFDKDAKTITVSDNGIGMTEEEVIENLGTIAKSGTKKFLESLTGDKSKDNELIGQFGVGFYSSFIVADKVTVRTRKAGQDKSQATKWVSDAQNGFTVETITKEKRGTEVILHIKKEHLDLLEYHVLKGLVNKYSDCINTPIQMKKVEYDKDGKQTVKDEYETVNNTKAIWLRSKDEVTDEEYQEFYKYISHDFADALMWIHNKVEGNLEYNSLLYIPQNKPFDFWNRDKDYGLSLYVRRVFIMENKELLPPYLRFVKGVIDSADLPLNVSREILQHNKVIDKIKKAITTKILSELKKLASKDKEKYQKFWDSFGQVLKEGVSDDYSNKEKIAGLLRFATTQSGDSKQTVSLADYISRMKEGQDTIYYITSDSYKAAANNPQLEAFKKKGIEVILMTDRIDEWMMSTLTEFDGKHMKSIIKGDIDLDKFETPENKEKFEKEAKDFEKVLKEIKEVLKDKVEDVRLSKRLTDSPSCVVVNDYGMSLHMQKMMEEAGQSFMPGMGMKPILELNAEHNLVQKLKNEADTEIFADLSELLLLQAMFVEGAKIEDPMAFVKLVNKYIR.

Residues 1–337 (MSEKKYTFET…SADLPLNVSR (337 aa)) are a; substrate-binding. The b stretch occupies residues 338-554 (EILQHNKVID…DYGMSLHMQK (217 aa)). Residues 555–628 (MMEEAGQSFM…FVKLVNKYIR (74 aa)) form a c region.

It belongs to the heat shock protein 90 family. In terms of assembly, homodimer.

The protein resides in the cytoplasm. Its function is as follows. Molecular chaperone. Has ATPase activity. In Francisella tularensis subsp. tularensis (strain WY96-3418), this protein is Chaperone protein HtpG.